The following is a 733-amino-acid chain: Microtubule-associated protein tau (733 aa).

The span at 1–16 (MADPRQEFDTMEDHAG) shows a compositional bias: basic and acidic residues. Positions 1 to 548 (MADPRQEFDT…PVPMPDLKNV (548 aa)) are disordered. Residue Ala2 is modified to N-acetylalanine. Tyr18 is subject to Phosphotyrosine; by FYN. A Glycyl lysine isopeptide (Lys-Gly) (interchain with G-Cter in ubiquitin) cross-link involves residue Lys33. A phosphoserine mark is found at Ser35 and Ser50. A compositionally biased stretch (polar residues) spans 50 to 60 (SETSDAKSTPT). Residues Thr58, Thr60, and Thr100 each carry the phosphothreonine modification. Arg115 carries the post-translational modification Omega-N-methylarginine. A compositionally biased stretch (polar residues) spans 126–137 (SDWTRQQVSSMS). Residues 157-172 (RPEDIEKSHPASELLR) are compositionally biased toward basic and acidic residues. At Ser188 the chain carries Phosphoserine. Residues 189-202 (EEEVDEDLTVDESS) are compositionally biased toward acidic residues. Over residues 203–212 (QDSPPSQASL) the composition is skewed to polar residues. Composition is skewed to basic and acidic residues over residues 270 to 294 (EEGH…KEQD) and 354 to 366 (ASKD…EKKA). Residues 413–427 (KHVSSVTPRNGSPGT) are compositionally biased toward polar residues. The residue at position 445 (Thr445) is a Phosphothreonine. Arg447 is modified (omega-N-methylarginine). At Ser451 the chain carries Phosphoserine. Lys455 is modified (N6,N6-dimethyllysine; alternate). An N6-acetyllysine; alternate modification is found at Lys455. Phosphothreonine is present on residues Thr461, Thr467, and Thr468. Ser470 carries the post-translational modification Phosphoserine. The residue at position 473 (Thr473) is a Phosphothreonine. 3 positions are modified to phosphoserine: Ser477, Ser483, and Ser487. The span at 479 to 506 (EPPKSGERSGYSSPGSPGTPGSRSRTPS) shows a compositional bias: low complexity. A Phosphotyrosine modification is found at Tyr489. Phosphoserine occurs at positions 490, 491, and 494. A phosphothreonine mark is found at Thr497 and Thr504. The residue at position 506 (Ser506) is a Phosphoserine. Position 509 is a phosphothreonine (Thr509). Lys517 is subject to N6-acetyllysine. Thr523 bears the Phosphothreonine mark. Phosphoserine is present on residues Ser527, Ser529, and Ser531. 4 Tau/MAP repeats span residues 536–566 (QTAP…GGGK), 567–597 (VQII…GGGS), 598–628 (VQIV…GGGQ), and 629–660 (VEVK…GGGN). Lys546 is covalently cross-linked (Glycyl lysine isopeptide (Lys-Gly) (interchain with G-Cter in ubiquitin)). The residue at position 551 (Lys551) is an N6-acetyllysine; alternate. Lys551 is subject to N6-methyllysine; alternate. A Glycyl lysine isopeptide (Lys-Gly) (interchain with G-Cter in ubiquitin); alternate cross-link involves residue Lys551. Ser554 bears the Phosphoserine; by MARK1, BRSK1, BRSK2 and PHK mark. Lys559 is covalently cross-linked (Glycyl lysine isopeptide (Lys-Gly) (interchain with G-Cter in ubiquitin)). At Lys573 the chain carries N6-acetyllysine; alternate. Residue Lys573 forms a Glycyl lysine isopeptide (Lys-Gly) (interchain with G-Cter in ubiquitin); alternate linkage. A phosphoserine mark is found at Ser577 and Ser581. N6-acetyllysine is present on Lys582. Cysteines 583 and 614 form a disulfide. Phosphoserine is present on Ser585. Lys590 is modified (N6-acetyllysine; alternate). Lys590 is covalently cross-linked (Glycyl lysine isopeptide (Lys-Gly) (interchain with G-Cter in ubiquitin); alternate). Position 597 is a phosphoserine (Ser597). An N6,N6-dimethyllysine; alternate modification is found at Lys603. 3 positions are modified to N6-acetyllysine; alternate: Lys603, Lys609, and Lys613. Glycyl lysine isopeptide (Lys-Gly) (interchain with G-Cter in ubiquitin); alternate cross-links involve residues Lys603, Lys609, and Lys613. At Ser616 the chain carries Phosphoserine. N6-acetyllysine; alternate is present on residues Lys623, Lys635, and Lys639. Glycyl lysine isopeptide (Lys-Gly) (interchain with G-Cter in ubiquitin); alternate cross-links involve residues Lys623, Lys635, and Lys639. Arg641 carries the post-translational modification Omega-N-methylarginine. A Phosphoserine modification is found at Ser644. Lys645 is covalently cross-linked (Glycyl lysine isopeptide (Lys-Gly) (interchain with G-Cter in ubiquitin)). Phosphoserine is present on Ser648. Residue Lys661 is modified to N6-acetyllysine; alternate. Lys661 is covalently cross-linked (Glycyl lysine isopeptide (Lys-Gly) (interchain with G-Cter in ubiquitin); alternate). A Glycyl lysine isopeptide (Lys-Gly) (interchain with G-Cter in ubiquitin) cross-link involves residue Lys667. Lys677 is subject to N6-acetyllysine; alternate. Residue Lys677 forms a Glycyl lysine isopeptide (Lys-Gly) (interchain with G-Cter in ubiquitin); alternate linkage. The residue at position 686 (Tyr686) is a Phosphotyrosine. At Ser688 the chain carries Phosphoserine. Residues 690 to 709 (VVSGDTSPRHLSNVSSTGSI) form a disordered region. The residue at position 692 (Ser692) is a Phosphoserine; alternate. O-linked (GlcNAc...) serine; alternate glycosylation is present at Ser692. The span at 693 to 708 (GDTSPRHLSNVSSTGS) shows a compositional bias: polar residues. Residue Thr695 is modified to Phosphothreonine. Phosphoserine is present on residues Ser696, Ser701, Ser708, and Ser714. Thr719 is subject to Phosphothreonine.

In terms of assembly, interacts with MARK1, MARK2, MARK3 and MARK4. Interacts with SQSTM1 when polyubiquitinated. Interacts with PSMC2 through SQSTM1. Interacts with FKBP4. Binds to CSNK1D. Interacts with SGK1. Interacts with EPM2A; the interaction dephosphorylates MAPT at Ser-369. Interacts with PIN1. Interacts with LRRK2. Interacts with LRP1, leading to endocytosis; this interaction is reduced in the presence of LRPAP1/RAP. Polyubiquitinated. Requires functional TRAF6 and may provoke SQSTM1-dependent degradation by the proteasome. In terms of processing, phosphorylation at various serine and threonine residues in S-P or T-P motifs by proline-directed protein kinases (PDPK1, CDK1, CDK5, GSK3, MAPK) (a few sites per protein in interphase, more in mitosis), and at serine residues in K-X-G-S motifs by MAP/microtubule affinity-regulating kinase (MARK1, MARK2, MARK3, MARK4), causing detachment from microtubules, and their disassembly. Phosphorylated by PHK. Dephosphorylation at several serine and threonine residues by the serine/threonine phosphatase PPP5C. Phosphorylation at Ser-554 by BRSK1 and BRSK2 in neurons affects ability to bind microtubules and plays a role in neuron polarization. Phosphorylation at Ser-188 by SGK1 mediates microtubule depolymerization and neurite formation in hippocampal neurons. As to expression, expressed in neurons and at a lower level in the liver and kidney. Isoform PNS-tau is expressed in the peripheral nervous system while the others are expressed in the central nervous system.

It is found in the cytoplasm. Its subcellular location is the cytosol. The protein resides in the cell membrane. It localises to the cytoskeleton. The protein localises to the cell projection. It is found in the axon. Its subcellular location is the dendrite. The protein resides in the secreted. Functionally, promotes microtubule assembly and stability, and might be involved in the establishment and maintenance of neuronal polarity. The C-terminus binds axonal microtubules while the N-terminus binds neural plasma membrane components, suggesting that tau functions as a linker protein between both. Axonal polarity is predetermined by tau localization (in the neuronal cell) in the domain of the cell body defined by the centrosome. The short isoforms allow plasticity of the cytoskeleton whereas the longer isoforms may preferentially play a role in its stabilization. The sequence is that of Microtubule-associated protein tau from Mus musculus (Mouse).